A 329-amino-acid chain; its full sequence is Phytochromobilin:ferredoxin oxidoreductase, chloroplastic (329 aa).

Residues 1 to 45 (MALSMEFGFSIGSCFKAPNPPVLISASPNKINFTLRRRKKRFLLR) constitute a chloroplast transit peptide.

It belongs to the HY2 family.

The protein resides in the plastid. The protein localises to the chloroplast. It catalyses the reaction (3Z)-phytochromobilin + 2 oxidized [2Fe-2S]-[ferredoxin] = biliverdin IXalpha + 2 reduced [2Fe-2S]-[ferredoxin] + 2 H(+). Functionally, catalyzes the two-electron reduction of biliverdin IX-alpha to the tetrapyrrole chromophore phytochromobilin (PPhiB). This Arabidopsis thaliana (Mouse-ear cress) protein is Phytochromobilin:ferredoxin oxidoreductase, chloroplastic.